The chain runs to 326 residues: Flavanone 3-dioxygenase 3 (326 aa).

Over residues 1–15 the composition is skewed to polar residues; it reads MSDTSKGIPQEQLPS. Residues 1–21 are disordered; that stretch reads MSDTSKGIPQEQLPSQELHPP. A Fe2OG dioxygenase domain is found at 175–276; it reads EGLQLLSVNC…RISLASIHGF (102 aa). Residues His200, Asp202, and His257 each coordinate Fe cation. Arg267 provides a ligand contact to 2-oxoglutarate.

The protein belongs to the iron/ascorbate-dependent oxidoreductase family. Fe(2+) serves as cofactor. It depends on L-ascorbate as a cofactor. In terms of tissue distribution, expressed at very low levels in roots, leaves, stems and seeds.

It carries out the reaction a (2S)-flavan-4-one + 2-oxoglutarate + O2 = a (2R,3R)-dihydroflavonol + succinate + CO2. It participates in secondary metabolite biosynthesis; flavonoid biosynthesis. In terms of biological role, catalyzes the 3-beta-hydroxylation of 2S-flavanones to 2R,3R-dihydroflavonols which are intermediates in the biosynthesis of flavonols, anthocyanidins, catechins and proanthocyanidins in plants. Converts (2S)-eriodictyol to (+)-taxifolin and (2S)-naringenin to (+)-(2R/3R)-dihydrokaempferol in vitro. In Oryza sativa subsp. japonica (Rice), this protein is Flavanone 3-dioxygenase 3.